Here is a 440-residue protein sequence, read N- to C-terminus: Adenylosuccinate synthetase (440 aa).

GTP contacts are provided by residues 11–17 and 39–41; these read GDEGKGG and GHT. Asp12 (proton acceptor) is an active-site residue. Residues Asp12 and Gly39 each coordinate Mg(2+). IMP contacts are provided by residues 12-15, 37-40, Thr127, Arg141, Gln230, Thr245, and Arg311; these read DEGK and NAGH. The Proton donor role is filled by His40. Residue 307–313 coordinates substrate; that stretch reads TVTGRPR. Residues Arg313, 339-341, and 424-426 each bind GTP; these read HLD and GVG.

This sequence belongs to the adenylosuccinate synthetase family. As to quaternary structure, homodimer. It depends on Mg(2+) as a cofactor.

Its subcellular location is the cytoplasm. It catalyses the reaction IMP + L-aspartate + GTP = N(6)-(1,2-dicarboxyethyl)-AMP + GDP + phosphate + 2 H(+). It participates in purine metabolism; AMP biosynthesis via de novo pathway; AMP from IMP: step 1/2. Its function is as follows. Plays an important role in the de novo pathway of purine nucleotide biosynthesis. Catalyzes the first committed step in the biosynthesis of AMP from IMP. This is Adenylosuccinate synthetase from Halobacterium salinarum (strain ATCC 29341 / DSM 671 / R1).